The chain runs to 278 residues: Diaminopimelate epimerase (278 aa).

N11 and N75 together coordinate substrate. C84 functions as the Proton donor in the catalytic mechanism. Substrate contacts are provided by residues 85–86 (GN), N160, N195, and 213–214 (ER). C222 serves as the catalytic Proton acceptor. 223–224 (GT) contributes to the substrate binding site.

This sequence belongs to the diaminopimelate epimerase family. Homodimer.

It is found in the cytoplasm. The enzyme catalyses (2S,6S)-2,6-diaminopimelate = meso-2,6-diaminopimelate. The protein operates within amino-acid biosynthesis; L-lysine biosynthesis via DAP pathway; DL-2,6-diaminopimelate from LL-2,6-diaminopimelate: step 1/1. Catalyzes the stereoinversion of LL-2,6-diaminopimelate (L,L-DAP) to meso-diaminopimelate (meso-DAP), a precursor of L-lysine and an essential component of the bacterial peptidoglycan. This Corynebacterium aurimucosum (strain ATCC 700975 / DSM 44827 / CIP 107346 / CN-1) (Corynebacterium nigricans) protein is Diaminopimelate epimerase.